We begin with the raw amino-acid sequence, 711 residues long: Ribosomal RNA large subunit methyltransferase K/L (711 aa).

Residues 43-154 (LGYRITLWSR…RGQITIGLNF (112 aa)) enclose the THUMP domain.

This sequence belongs to the methyltransferase superfamily. RlmKL family.

It is found in the cytoplasm. The enzyme catalyses guanosine(2445) in 23S rRNA + S-adenosyl-L-methionine = N(2)-methylguanosine(2445) in 23S rRNA + S-adenosyl-L-homocysteine + H(+). The catalysed reaction is guanosine(2069) in 23S rRNA + S-adenosyl-L-methionine = N(2)-methylguanosine(2069) in 23S rRNA + S-adenosyl-L-homocysteine + H(+). Specifically methylates the guanine in position 2445 (m2G2445) and the guanine in position 2069 (m7G2069) of 23S rRNA. The polypeptide is Ribosomal RNA large subunit methyltransferase K/L (Shewanella sediminis (strain HAW-EB3)).